The primary structure comprises 330 residues: D-alanine--D-alanine ligase (330 aa).

The 207-residue stretch at 120–326 (KLWYDALGIP…FKTFLQKAVL (207 aa)) folds into the ATP-grasp domain. 150–205 (AFKQWGGLFVKAACQGSSVGCYKVTSEEELAQAINGAFGYSQQVLVEKAVKPRELE) contacts ATP. Mg(2+) contacts are provided by aspartate 280, glutamate 293, and asparagine 295.

The protein belongs to the D-alanine--D-alanine ligase family. The cofactor is Mg(2+). Mn(2+) is required as a cofactor.

The protein localises to the cytoplasm. The enzyme catalyses 2 D-alanine + ATP = D-alanyl-D-alanine + ADP + phosphate + H(+). It functions in the pathway cell wall biogenesis; peptidoglycan biosynthesis. Cell wall formation. The protein is D-alanine--D-alanine ligase of Aliivibrio fischeri (strain MJ11) (Vibrio fischeri).